We begin with the raw amino-acid sequence, 499 residues long: Beta-amylase (499 aa).

Substrate contacts are provided by D55, H95, and D103. E188 serves as the catalytic Proton donor. Residues K298, H303, and T345 each contribute to the substrate site. Residue E383 is the Proton acceptor of the active site. Residues 384-385 and R423 each bind substrate; that span reads NA.

Belongs to the glycosyl hydrolase 14 family. As to quaternary structure, homotetramer.

It catalyses the reaction Hydrolysis of (1-&gt;4)-alpha-D-glucosidic linkages in polysaccharides so as to remove successive maltose units from the non-reducing ends of the chains.. This Ipomoea batatas (Sweet potato) protein is Beta-amylase (BMY1).